The chain runs to 398 residues: Probable sugar efflux transporter (398 aa).

12 consecutive transmembrane segments (helical) span residues 15-35 (VVTL…PVGL), 50-70 (VGIM…PFML), 81-101 (LIGL…AWNF), 103-123 (VLVI…SITA), 136-156 (AQAL…GLPI), 169-189 (TFFA…KLLP), 209-229 (PALM…YTAY), 246-266 (FATV…VLFG), 275-295 (LLVS…MPAA), 301-321 (LAIL…GMQV), 333-353 (VAMS…ALVG), and 364-384 (AIGY…ILIF).

The protein belongs to the major facilitator superfamily. SotB (TC 2.A.1.2) family.

It localises to the cell inner membrane. In terms of biological role, involved in the efflux of sugars. The physiological role may be the reduction of the intracellular concentration of toxic sugars or sugar metabolites. In Enterobacter sp. (strain 638), this protein is Probable sugar efflux transporter.